The chain runs to 472 residues: MPQTPPFSAMFDSSGYNRNLYQSAEDSCGGLYYHDNNLLSGSLEALIQHLVPNVDYYPDRTYIFTFLLSSRLFMHPYELMAKVCHLCVEHQRLSDPDSDKNQMRKIAPKVLQLLTEWTETFPYDFRDERMMRNLKDLAHRIASGEETYRKNVQQMMQCLIRKLAALSQYEEVLAKISSTSTDRLTVLKTKPQSIQRDIITVCNDPYTLAQQLTHIELERLNYIGPEEFVQAFVQKDPLDNDKSCYSERKKTRNLEAYVEWFNRLSYLVATEICMPVKKKHRARMIEYFIDVARECFNIGNFNSLMAIISGMNMSPVSRLKKTWAKVKTAKFDILEHQMDPSSNFYNYRTALRGAAQRSLTAHSSREKIVIPFFSLLIKDIYFLNEGCANRLPNGHVNFEKFWELAKQVSEFMTWKQVECPFERDRKILQYLLTVPVFSEDALYLASYESEGPENHIEKDRWKSLRSSLLGRV.

The 131-residue stretch at 34–164 (HDNNLLSGSL…MMQCLIRKLA (131 aa)) folds into the N-terminal Ras-GEF domain. The Ras-GEF domain maps to 204 to 452 (DPYTLAQQLT…YLASYESEGP (249 aa)).

Interacts with CCDC124 during cytokinesis. Interacts with Ras family proteins.

The protein localises to the early endosome. It localises to the late endosome. Its subcellular location is the midbody. In terms of biological role, guanine nucleotide exchange factor (GEF) with specificity for RAP2A, it doesn't seems to activate other Ras family proteins (in vitro). The protein is Ras-GEF domain-containing family member 1B (RASGEF1B) of Pongo abelii (Sumatran orangutan).